The following is a 233-amino-acid chain: MHLLIPAAGRGSRMGADGNKLLLPLSGRPLLAWTLAAAAQAPSTRWIGIIGQPMDEEAIRLLAQKLGLRVPVHWIEGGETRQQSVYRGLLALPVEAQQVLIHDGARCLASPALFERCAAALAEFSAIVAAVPVKDTIKQVYPQSRQVEKTIPREQLWAAQTPQGGNVGRLKAAHAWAAAQAVAVTDDAALCELRGEPVQVVPGEETNLKITTPADLLVAEAILKTQLRQDPSP.

This sequence belongs to the IspD/TarI cytidylyltransferase family. IspD subfamily.

It catalyses the reaction 2-C-methyl-D-erythritol 4-phosphate + CTP + H(+) = 4-CDP-2-C-methyl-D-erythritol + diphosphate. Its pathway is isoprenoid biosynthesis; isopentenyl diphosphate biosynthesis via DXP pathway; isopentenyl diphosphate from 1-deoxy-D-xylulose 5-phosphate: step 2/6. In terms of biological role, catalyzes the formation of 4-diphosphocytidyl-2-C-methyl-D-erythritol from CTP and 2-C-methyl-D-erythritol 4-phosphate (MEP). This is 2-C-methyl-D-erythritol 4-phosphate cytidylyltransferase from Gloeobacter violaceus (strain ATCC 29082 / PCC 7421).